A 551-amino-acid chain; its full sequence is MPKPWVVFGLGTLVLFLWRLNKIGRRPKNYPPGPPTLPLIGNLHLMPKKNAHLQFQRWAEEYGPVYSLMLGTKVAIVLSSDVAVKDLLDKRSSIYSGRPELYMGQEIMSGGNRPLFMGINSVWRRVRKLAHGLLNVKVSRTYVPYQDLESRDMLMGLLESPKDFLNHIRRYTTSLTTQMAFGYRTPSSDDKGLLEMFENFDELSRLTGSQSAAILDLYPIARILPDFLLPARRLGREYYEREKKLFMKHFLNARQQLNSGTSKPCCAIDLLRAQKEYGFSDEFGCYLSGSLLQAGSETTAIILTGFFQAMLVFPEVSKEAQEEIDRVCGDRLPDLNDYPNLPYIRACLKESLRWMPATALGVPHAVIQDDSYLGYHIPKDAGLILNVWAIHNDSKRHPDPRRYNPARWAGDNQNSAQAAVNPDPTKRDHFVFGAGRRLCQGMHIADRSLFLAISRTLWAFDLKRPVDKETGHEIIPDVDNIKDGLFISPMPFAADIVPRSESRAAAVRQEWENVAGLLDDDMQWKTVPEGLKWKDYEPLDDENEDLLESLS.

Residues methionine 1 to arginine 25 form the signal peptide. Asparagine 392 carries N-linked (GlcNAc...) asparagine glycosylation. Cysteine 439 serves as a coordination point for heme.

This sequence belongs to the cytochrome P450 family. The cofactor is heme.

It functions in the pathway secondary metabolite biosynthesis. Its function is as follows. Cytochrome P450 monooxygenase; part of the gene cluster that mediates the biosynthesis of virensols and trichoxide, fungal natural products that contain or are derived from a salicylaldehyde core. The pathway begins with the synthesis of the reduced chain in virensol C by the highly reducing polyketide synthase virA via condensation of one acetate and 8 malonate units. VirA has interesting programming rules since the first 2 ketides are fully reduced, the 3 following ketides undergo beta-dehydration, and the last 3 ketides are only reduced to beta-hydroxys to yield the trihydroxy portion. The production of aldehyde virensol C by virA alone is surprising, since virA does not contain a reductase (R) domain that is typically associated with reductive product release in HRPKS. The cupin-domain enzyme virC is involved in enhancing virA product turnover. The short-chain dehydrogenase virB then oxidizes the C-7 alcohol of virensol C to a ketone, yielding virensol D. Virensol D is further transformed to salicylaldehyde 5-deoxyaurocitrin by the short-chain dehydrogenase virD. VirD catalyzes the dehydrogenation of C-3 to form the beta-ketone aldehyde, which is followed by the generation of the nucleophilic C-2 that is required for the intramolecular aldol condensation between C-2 and C-7, itself followed by dehydration and aromatization which leads to salicylaldehyde 5-deoxyaurocitrin. While the dehydrogenation of virensol D is definitely catalyzed by virD, the aldol condensation and dehydration may be uncatalyzed or assisted by virD. The short chain dehydrogenase virG then converts salicylaldehyde 5-deoxyaurocitrin into virensol B which is further hydroxylated by the cytochrome P450 monooxygenase virE to yield the hydroquinone virensol A. VirI then may oxidize virensol A to form the quinone, while virH performs the epoxidation. Finally, the two remaining short-chain dehydrogenases, virK and virL, are probably responsible for reducing the ketones to the corresponding alcohols to furnish the epoxycyclohexanol structure in trichoxide. The chain is Cytochrome P450 monooxygenase virE from Hypocrea virens (strain Gv29-8 / FGSC 10586) (Gliocladium virens).